Here is a 102-residue protein sequence, read N- to C-terminus: Urease subunit beta (102 aa).

This sequence belongs to the urease beta subunit family. Heterotrimer of UreA (gamma), UreB (beta) and UreC (alpha) subunits. Three heterotrimers associate to form the active enzyme.

The protein localises to the cytoplasm. It carries out the reaction urea + 2 H2O + H(+) = hydrogencarbonate + 2 NH4(+). The protein operates within nitrogen metabolism; urea degradation; CO(2) and NH(3) from urea (urease route): step 1/1. The polypeptide is Urease subunit beta (Pseudomonas savastanoi pv. phaseolicola (strain 1448A / Race 6) (Pseudomonas syringae pv. phaseolicola (strain 1448A / Race 6))).